A 265-amino-acid polypeptide reads, in one-letter code: MKALHKTSFWESLAIQRRVIGALLMREIITRYGRNNIGFLWLFVEPLLMTFVIVLMWKFLRADRYSTLNIVAFAITGYPMLMMWRNASKRAVGSISSNASLLYHRNVRVLDTILARMILEIAGATIAQIVIMAVLIAIGWIEMPADMFYMLMAWLLMAFFAIGLGLVICSIAFNFEPFGKIWGTLTFVMMPLSGAFFFVHNLPPKVQEYALMIPMVHGTEMFRAGYFGSDVITYENPWYIVLCNLVLLLFGLAMVSKFSKGVEPQ.

The next 6 helical transmembrane spans lie at 37-57 (IGFLWLFVEPLLMTFVIVLMW), 67-84 (TLNIVAFAITGYPMLMMW), 121-141 (IAGATIAQIVIMAVLIAIGWI), 148-168 (FYMLMAWLLMAFFAIGLGLVI), 178-198 (FGKIWGTLTFVMMPLSGAFFF), and 238-258 (WYIVLCNLVLLLFGLAMVSKF). The region spanning 37-258 (IGFLWLFVEP…LFGLAMVSKF (222 aa)) is the ABC transmembrane type-2 domain.

The protein belongs to the ABC-2 integral membrane protein family.

The protein resides in the cell inner membrane. May form an ATP-driven capsule polysaccharide export apparatus, in association with the CtrB and CtrD proteins. The chain is Capsule polysaccharide export inner-membrane protein CtrC (ctrC) from Neisseria meningitidis serogroup B (strain ATCC BAA-335 / MC58).